Here is a 377-residue protein sequence, read N- to C-terminus: Nitric oxide reductase FlRd-NAD(+) reductase (377 aa).

Belongs to the FAD-dependent oxidoreductase family. FAD serves as cofactor.

It is found in the cytoplasm. It catalyses the reaction 2 reduced [nitric oxide reductase rubredoxin domain] + NAD(+) + H(+) = 2 oxidized [nitric oxide reductase rubredoxin domain] + NADH. Its pathway is nitrogen metabolism; nitric oxide reduction. Its function is as follows. One of at least two accessory proteins for anaerobic nitric oxide (NO) reductase. Reduces the rubredoxin moiety of NO reductase. This chain is Nitric oxide reductase FlRd-NAD(+) reductase, found in Klebsiella pneumoniae (strain 342).